Reading from the N-terminus, the 194-residue chain is ATP synthase subunit delta (194 aa).

This sequence belongs to the ATPase delta chain family. In terms of assembly, F-type ATPases have 2 components, F(1) - the catalytic core - and F(0) - the membrane proton channel. F(1) has five subunits: alpha(3), beta(3), gamma(1), delta(1), epsilon(1). F(0) has three main subunits: a(1), b(2) and c(10-14). The alpha and beta chains form an alternating ring which encloses part of the gamma chain. F(1) is attached to F(0) by a central stalk formed by the gamma and epsilon chains, while a peripheral stalk is formed by the delta and b chains.

The protein localises to the cell inner membrane. In terms of biological role, f(1)F(0) ATP synthase produces ATP from ADP in the presence of a proton or sodium gradient. F-type ATPases consist of two structural domains, F(1) containing the extramembraneous catalytic core and F(0) containing the membrane proton channel, linked together by a central stalk and a peripheral stalk. During catalysis, ATP synthesis in the catalytic domain of F(1) is coupled via a rotary mechanism of the central stalk subunits to proton translocation. Functionally, this protein is part of the stalk that links CF(0) to CF(1). It either transmits conformational changes from CF(0) to CF(1) or is implicated in proton conduction. In Parvibaculum lavamentivorans (strain DS-1 / DSM 13023 / NCIMB 13966), this protein is ATP synthase subunit delta.